The chain runs to 186 residues: PRKR-interacting protein 1 (186 aa).

The interaction with EIF2AK2 stretch occupies residues 1–50; sequence MASSAASSVRPPRPKKEPQALIIPKNAAEEQKLKLERLMKNPDKAVPIPE. Disordered stretches follow at residues 39–61 and 119–186; these read MKNP…RPPP and AAEE…ITGR. The segment at 51 to 143 is required for RNA-binding; sequence KMSEWAPRPP…LKEKKLLAKK (93 aa). Residues 86 to 153 are a coiled coil; that stretch reads RRREYQRQDY…MKLEQKKQSE (68 aa). The required for nuclear localization stretch occupies residues 126-138; sequence KRRKKRQKLKEKK. Residues 126 to 143 show a composition bias toward basic residues; the sequence is KRRKKRQKLKEKKLLAKK. Over residues 153–162 the composition is skewed to polar residues; sequence EASSETQEQP. The span at 170-179 shows a compositional bias: acidic residues; the sequence is SGTEDEEEDA.

It belongs to the PRKRIP1 family. In terms of assembly, component of the pre-catalytic and post-catalytic spliceosome complexes. Interacts with EIF2AK2.

It is found in the nucleus. It localises to the nucleolus. In terms of biological role, required for pre-mRNA splicing as component of the spliceosome. Binds double-stranded RNA. Inhibits EIF2AK2 kinase activity. This chain is PRKR-interacting protein 1 (PRKRIP1), found in Bos taurus (Bovine).